Here is a 125-residue protein sequence, read N- to C-terminus: MGTRAQARFVRVTPRKARRVVDLIRGLPAEEAQAVLRFAPQAASGPVGKVLASAIANAEHNDKLDRETLVVSRAWVDEGPTLKRIRPRGFGRAFRVNKRTSHITVEVAPRDTVGAASAKRKERTR.

The protein belongs to the universal ribosomal protein uL22 family. Part of the 50S ribosomal subunit.

This protein binds specifically to 23S rRNA; its binding is stimulated by other ribosomal proteins, e.g. L4, L17, and L20. It is important during the early stages of 50S assembly. It makes multiple contacts with different domains of the 23S rRNA in the assembled 50S subunit and ribosome. Functionally, the globular domain of the protein is located near the polypeptide exit tunnel on the outside of the subunit, while an extended beta-hairpin is found that lines the wall of the exit tunnel in the center of the 70S ribosome. This Thermobifida fusca (strain YX) protein is Large ribosomal subunit protein uL22.